Consider the following 459-residue polypeptide: Putative flavin-containing monooxygenase 2 (459 aa).

FAD is bound by residues 17–21 (GAGVS), Glu38, and 46–47 (VW). 217 to 220 (SAID) is a binding site for NADP(+).

The protein belongs to the FMO family. It depends on FAD as a cofactor.

This is Putative flavin-containing monooxygenase 2 (FMO2) from Arabidopsis thaliana (Mouse-ear cress).